A 269-amino-acid polypeptide reads, in one-letter code: D-aminoacyl-tRNA deacylase (269 aa).

Belongs to the DtdA deacylase family. In terms of assembly, monomer. Zn(2+) is required as a cofactor.

It catalyses the reaction a D-aminoacyl-tRNA + H2O = a tRNA + a D-alpha-amino acid + H(+). The enzyme catalyses glycyl-tRNA(Ala) + H2O = tRNA(Ala) + glycine + H(+). Its function is as follows. D-aminoacyl-tRNA deacylase with broad substrate specificity. By recycling D-aminoacyl-tRNA to D-amino acids and free tRNA molecules, this enzyme counteracts the toxicity associated with the formation of D-aminoacyl-tRNA entities in vivo. The protein is D-aminoacyl-tRNA deacylase of Caldivirga maquilingensis (strain ATCC 700844 / DSM 13496 / JCM 10307 / IC-167).